We begin with the raw amino-acid sequence, 713 residues long: Glycine--tRNA ligase beta subunit (713 aa).

The protein belongs to the class-II aminoacyl-tRNA synthetase family. Tetramer of two alpha and two beta subunits.

The protein resides in the cytoplasm. The catalysed reaction is tRNA(Gly) + glycine + ATP = glycyl-tRNA(Gly) + AMP + diphosphate. The sequence is that of Glycine--tRNA ligase beta subunit from Picosynechococcus sp. (strain ATCC 27264 / PCC 7002 / PR-6) (Agmenellum quadruplicatum).